The primary structure comprises 371 residues: Chaperone protein DnaJ (371 aa).

Positions 5 to 69 constitute a J domain; it reads DYYEILGIAK…QKRAAYDQHG (65 aa). The CR-type zinc-finger motif lies at 127 to 205; the sequence is GASKEIHITT…CRGQGKVEEP (79 aa). Residues Cys140, Cys143, Cys157, Cys160, Cys179, Cys182, Cys193, and Cys196 each contribute to the Zn(2+) site. CXXCXGXG motif repeat units lie at residues 140–147, 157–164, 179–186, and 193–200; these read CEHCKGSG, CTTCRGVG, CPRCHGQG, and CRQCRGQG.

It belongs to the DnaJ family. As to quaternary structure, homodimer. It depends on Zn(2+) as a cofactor.

Its subcellular location is the cytoplasm. Functionally, participates actively in the response to hyperosmotic and heat shock by preventing the aggregation of stress-denatured proteins and by disaggregating proteins, also in an autonomous, DnaK-independent fashion. Unfolded proteins bind initially to DnaJ; upon interaction with the DnaJ-bound protein, DnaK hydrolyzes its bound ATP, resulting in the formation of a stable complex. GrpE releases ADP from DnaK; ATP binding to DnaK triggers the release of the substrate protein, thus completing the reaction cycle. Several rounds of ATP-dependent interactions between DnaJ, DnaK and GrpE are required for fully efficient folding. Also involved, together with DnaK and GrpE, in the DNA replication of plasmids through activation of initiation proteins. The sequence is that of Chaperone protein DnaJ from Hamiltonella defensa subsp. Acyrthosiphon pisum (strain 5AT).